Reading from the N-terminus, the 59-residue chain is Large ribosomal subunit protein uL30 (59 aa).

The protein belongs to the universal ribosomal protein uL30 family. Part of the 50S ribosomal subunit.

In Clostridium botulinum (strain Alaska E43 / Type E3), this protein is Large ribosomal subunit protein uL30.